The primary structure comprises 354 residues: CCN family member 3 (354 aa).

Positions 1–21 (MSLFLRKRCLCLGFLLFHLLS) are cleaved as a signal peptide. Positions 25–99 (ASLRCPSRCP…NNQTGICMVP (75 aa)) constitute an IGFBP N-terminal domain. Disulfide bonds link cysteine 29/cysteine 55, cysteine 33/cysteine 57, cysteine 37/cysteine 58, cysteine 44/cysteine 61, cysteine 69/cysteine 83, and cysteine 75/cysteine 96. N-linked (GlcNAc...) asparagine glycosylation occurs at asparagine 91. The VWFC domain occupies 102 to 168 (DNCVFDGVIY…GECCEKWTCG (67 aa)). Residues 202–247 (NCIEQTTEWSACSKSCGMGVSTRVTNRNRQCEMVKQTRLCIVRPCE) form the TSP type-1 domain. Cysteine 241 carries the S-palmitoyl cysteine lipid modification. Cystine bridges form between cysteine 261-cysteine 298, cysteine 278-cysteine 312, cysteine 289-cysteine 328, cysteine 292-cysteine 330, and cysteine 297-cysteine 334. A CTCK domain is found at 261–335 (CLRTKKSLKA…GTCTCYSNCP (75 aa)). Residue asparagine 277 is glycosylated (N-linked (GlcNAc...) asparagine).

It belongs to the CCN family. Interacts with FBLN1. Interacts (via CTCK domain) with NOTCH1 (via the EGF-like repeat region). Interacts with GJA1/CX43. Interacts with ITGA5:ITGB1, ITGAV:ITGB3 and ITGAV:ITGB5. Interacts with ZDHHC22; the interaction may lead to CCN3 palmitoylation. Post-translationally, may be palmitoylated on Cys-241, which is important for extracellular secretion. Expressed in large vessels including the ascending aorta, carotid arteries, and the thoracic aorta, in medium-sized vessels such as coronary arteries and small pulmonary veins and also in small vessels. In addition, also found to be present in the heart (at protein level). Expressed in astrocytes (at protein level). Detected in brain, bone, lung and muscle tissues. Expressed in skin, expression highly increases 5 days post-wounding, peaking on the 7th day to decline after 9 days. Expressed in pancreatic ducts and beta-cell islets. Expressed in the brain, in arcuate nucleus ESR1/KISS1 neurons, during lactation (at protein level).

The protein resides in the secreted. It localises to the cytoplasm. It is found in the cell junction. The protein localises to the gap junction. In terms of biological role, immediate-early protein playing a role in various cellular processes including proliferation, adhesion, migration, differentiation and survival. Acts by binding to integrins or membrane receptors such as NOTCH1. Essential regulator of hematopoietic stem and progenitor cell function. Inhibits myogenic differentiation through the activation of Notch-signaling pathway. Inhibits vascular smooth muscle cells proliferation by increasing expression of cell-cycle regulators such as CDKN2B or CDKN1A independently of TGFB1 signaling. Ligand of integrins ITGAV:ITGB3 and ITGA5:ITGB1, acts directly upon endothelial cells to stimulate pro-angiogenic activities and induces angiogenesis. In endothelial cells, supports cell adhesion, induces directed cell migration (chemotaxis) and promotes cell survival. Also plays a role in cutaneous wound healing acting as integrin receptor ligand. Supports skin fibroblast adhesion through ITGA5:ITGB1 and ITGA6:ITGB1 and induces fibroblast chemotaxis through ITGAV:ITGB5. Seems to enhance bFGF-induced DNA synthesis in fibroblasts. Involved in bone regeneration as a negative regulator. Enhances the articular chondrocytic phenotype, whereas it repressed the one representing endochondral ossification. Impairs pancreatic beta-cell function, inhibits beta-cell proliferation and insulin secretion. Plays a role as negative regulator of endothelial pro-inflammatory activation reducing monocyte adhesion, its anti-inflammatory effects occur secondary to the inhibition of NF-kappaB signaling pathway. Contributes to the control and coordination of inflammatory processes in atherosclerosis. Attenuates inflammatory pain through regulation of IL1B- and TNF-induced MMP9, MMP2 and CCL2 expression. Inhibits MMP9 expression through ITGB1 engagement. Brain osteoanabolic hormone. During lactation, maintains the maternal skeleton and viability of offspring. In this context, may act on osteochondral skeletal stem cells. This chain is CCN family member 3 (Ccn3), found in Mus musculus (Mouse).